The sequence spans 309 residues: Methionyl-tRNA formyltransferase (309 aa).

Residue 112 to 115 (SLLP) participates in (6S)-5,6,7,8-tetrahydrofolate binding.

The protein belongs to the Fmt family.

The catalysed reaction is L-methionyl-tRNA(fMet) + (6R)-10-formyltetrahydrofolate = N-formyl-L-methionyl-tRNA(fMet) + (6S)-5,6,7,8-tetrahydrofolate + H(+). In terms of biological role, attaches a formyl group to the free amino group of methionyl-tRNA(fMet). The formyl group appears to play a dual role in the initiator identity of N-formylmethionyl-tRNA by promoting its recognition by IF2 and preventing the misappropriation of this tRNA by the elongation apparatus. This Bartonella bacilliformis (strain ATCC 35685 / KC583 / Herrer 020/F12,63) protein is Methionyl-tRNA formyltransferase.